Reading from the N-terminus, the 362-residue chain is Transcription factor Sox-7 (362 aa).

Residues 21–41 (EDLSDGLSPHRSPREKGSETR) are disordered. Positions 32–41 (SPREKGSETR) are enriched in basic and acidic residues. Positions 42–110 (IRRPMNAFMV…QHMQDYPNYK (69 aa)) form a DNA-binding region, HMG box. A Sox C-terminal domain is found at 245–362 (QTGSSMIPPV…ATYYNSYSVS (118 aa)).

As to expression, expressed in the embryonic pronephric sinus as well as posterior cardinal veins.

It is found in the nucleus. Functionally, transcription factor. Binds to the DNA sequence 5'-AACAAT-3'. Acts downstream of vegt and upstream of nodal signaling to promote endodermal and mesodermal differentiation by promoting vegt-induced expression of both endodermal genes (including endodermin) and mesodermal genes (including snai1/snail and snai2/slug). Induces expression of multiple nodal genes (including nodal, nodal2, nodal4, nodal5 and nodal6) and binds directly to sites within the promoter of the nodal5 gene. The endodermal and mesodermal specification pathways then interact to initiate cardiogenesis. Acts partially redundantly with sox18 during cardiogenesis. Also acts as an antagonist of beta-catenin signaling. Regulates (possibly indirectly) development of the pronephros, the functional larval kidney. The sequence is that of Transcription factor Sox-7 from Xenopus tropicalis (Western clawed frog).